A 399-amino-acid chain; its full sequence is Accessory Sec system protein translocase subunit SecY2 (399 aa).

The next 10 helical transmembrane spans lie at 14 to 34, 60 to 80, 102 to 122, 128 to 148, 152 to 172, 184 to 204, 238 to 258, 272 to 292, 335 to 355, and 362 to 382; these read ILFT…SIVG, LNVF…IMLL, IITI…YIHN, SNII…VWLA, ITYG…KSLF, VLLL…LLFI, ISIM…NLIA, FANP…SYLL, WTGA…TLLV, and IYFS…GETI.

This sequence belongs to the SecY/SEC61-alpha family. SecY2 subfamily. As to quaternary structure, component of the accessory SecA2/SecY2 protein translocase complex required to export cell wall proteins. May form heterotrimers with SecE and SecG subunits.

The protein localises to the cell membrane. Functionally, part of the accessory SecA2/SecY2 system specifically required for export of possible cell wall proteins. The central subunit of a protein translocation channel. This Staphylococcus haemolyticus (strain JCSC1435) protein is Accessory Sec system protein translocase subunit SecY2.